A 338-amino-acid chain; its full sequence is 1-aminocyclopropane-1-carboxylate deaminase (338 aa).

At Lys-51 the chain carries N6-(pyridoxal phosphate)lysine. Ser-78 (nucleophile) is an active-site residue.

It belongs to the ACC deaminase/D-cysteine desulfhydrase family. In terms of assembly, homotrimer. The cofactor is pyridoxal 5'-phosphate.

It carries out the reaction 1-aminocyclopropane-1-carboxylate + H2O = 2-oxobutanoate + NH4(+). Its function is as follows. Catalyzes a cyclopropane ring-opening reaction, the irreversible conversion of 1-aminocyclopropane-1-carboxylate (ACC) to ammonia and alpha-ketobutyrate. Allows growth on ACC as a nitrogen source. This is 1-aminocyclopropane-1-carboxylate deaminase from Paracidovorax citrulli (strain AAC00-1) (Acidovorax citrulli).